A 522-amino-acid chain; its full sequence is GMP synthase [glutamine-hydrolyzing] (522 aa).

The Glutamine amidotransferase type-1 domain maps to 9–204 (KILILDFGAQ…VVDICGCQTL (196 aa)). The Nucleophile role is filled by C86. Active-site residues include H178 and E180. The region spanning 205–397 (WTSANIIEDQ…LGLPHAMVYR (193 aa)) is the GMPS ATP-PPase domain. 232–238 (SGGVDSS) is an ATP binding site.

In terms of assembly, homodimer.

The catalysed reaction is XMP + L-glutamine + ATP + H2O = GMP + L-glutamate + AMP + diphosphate + 2 H(+). Its pathway is purine metabolism; GMP biosynthesis; GMP from XMP (L-Gln route): step 1/1. Catalyzes the synthesis of GMP from XMP. In Xylella fastidiosa (strain M23), this protein is GMP synthase [glutamine-hydrolyzing].